A 318-amino-acid chain; its full sequence is MLRSKLSSLREYLTPINHNSNFSTTGEISPEEFVQAGDYLVYKFPTWQWSTCPKNLQKSFLPADKQFLITRHVPSYQRASNYLTGGNVDFDDDEEYEDDEEGDGWVKSRKVVSVTKPQDGQEEEPQEINDIDDLIDVTAEGAEDDGDNLEDFDDLDIRNDGGSVRKYDMYITYSTSYRVPKMYLVGFNANGIPLTPDQMFEDINADYKDKTATIENLPVAHNTTSVSIHPCKHSSVMKVLMKHSKSKKTREEVNHLSEELGKTNISDKSQEDTGKDAEAAAGPEAEDSIRVDQYLVIFLKFIASVTPGIEYDYTMDAL.

Residues 82–161 (YLTGGNVDFD…FDDLDIRNDG (80 aa)) are flexible region. A disordered region spans residues 83-104 (LTGGNVDFDDDEEYEDDEEGDG). The segment covering 89–103 (DFDDDEEYEDDEEGD) has biased composition (acidic residues). The active-site Glycyl thioester intermediate is the C231. Residues 235–293 (SVMKVLMKHSKSKKTREEVNHLSEELGKTNISDKSQEDTGKDAEAAAGPEAEDSIRVDQ) are handle region. A disordered region spans residues 244 to 284 (SKSKKTREEVNHLSEELGKTNISDKSQEDTGKDAEAAAGPE). Composition is skewed to basic and acidic residues over residues 249-261 (TREEVNHLSEELG) and 268-278 (KSQEDTGKDAE).

The protein belongs to the ATG3 family. As to quaternary structure, monomer. Interacts with ATG8 through an intermediate thioester bond through the C-terminal Gly of ATG8. Also interacts with the 40 amino acid C-terminal region of the E1-like ATG7 enzyme. Also interacts with the ATG12-ATG5 conjugate.

The protein localises to the cytoplasm. Its function is as follows. E2 conjugating enzyme required for the cytoplasm to vacuole transport (Cvt) and autophagy. Required for selective autophagic degradation of the nucleus (nucleophagy) as well as for mitophagy which contributes to regulate mitochondrial quantity and quality by eliminating the mitochondria to a basal level to fulfill cellular energy requirements and preventing excess ROS production. Responsible for the E2-like covalent binding of phosphatidylethanolamine to the C-terminal Gly of ATG8. The ATG12-ATG5 conjugate plays a role of an E3 and promotes the transfer of ATG8 from ATG3 to phosphatidylethanolamine (PE). This step is required for the membrane association of ATG8. The formation of the ATG8-phosphatidylethanolamine conjugate is essential for autophagy and for the cytoplasm to vacuole transport (Cvt). The ATG8-PE conjugate mediates tethering between adjacent membranes and stimulates membrane hemifusion, leading to expansion of the autophagosomal membrane during autophagy. The chain is Autophagy-related protein 3 (ATG3) from Scheffersomyces stipitis (strain ATCC 58785 / CBS 6054 / NBRC 10063 / NRRL Y-11545) (Yeast).